The primary structure comprises 485 residues: Fumarate hydratase, mitochondrial (485 aa).

The transit peptide at M1–N19 directs the protein to the mitochondrion. Residues S118–T120, H150–D153, S160–N162, and T208 contribute to the substrate site. H209 (proton donor/acceptor) is an active-site residue. The active site involves S339. Substrate is bound by residues S340 and K345–N347.

It belongs to the class-II fumarase/aspartase family. Fumarase subfamily. In terms of assembly, homotetramer.

The protein resides in the mitochondrion. The protein localises to the cytoplasm. The enzyme catalyses (S)-malate = fumarate + H2O. Its pathway is carbohydrate metabolism; tricarboxylic acid cycle; (S)-malate from fumarate: step 1/1. Catalyzes the reversible stereospecific interconversion of fumarate to L-malate. Its function is as follows. Catalyzes the hydration of fumarate to L-malate in the tricarboxylic acid (TCA) cycle to facilitate a transition step in the production of energy in the form of NADH. The polypeptide is Fumarate hydratase, mitochondrial (Dictyostelium discoideum (Social amoeba)).